The following is a 677-amino-acid chain: UvrABC system protein B (677 aa).

Residues glutamate 24–arginine 412 form the Helicase ATP-binding domain. Glycine 37 to threonine 44 serves as a coordination point for ATP. The short motif at tyrosine 90 to isoleucine 113 is the Beta-hairpin element. The Helicase C-terminal domain occupies glutamine 429–arginine 591. The 36-residue stretch at glutamate 635 to leucine 670 folds into the UVR domain.

This sequence belongs to the UvrB family. In terms of assembly, forms a heterotetramer with UvrA during the search for lesions. Interacts with UvrC in an incision complex.

The protein resides in the cytoplasm. Its function is as follows. The UvrABC repair system catalyzes the recognition and processing of DNA lesions. A damage recognition complex composed of 2 UvrA and 2 UvrB subunits scans DNA for abnormalities. Upon binding of the UvrA(2)B(2) complex to a putative damaged site, the DNA wraps around one UvrB monomer. DNA wrap is dependent on ATP binding by UvrB and probably causes local melting of the DNA helix, facilitating insertion of UvrB beta-hairpin between the DNA strands. Then UvrB probes one DNA strand for the presence of a lesion. If a lesion is found the UvrA subunits dissociate and the UvrB-DNA preincision complex is formed. This complex is subsequently bound by UvrC and the second UvrB is released. If no lesion is found, the DNA wraps around the other UvrB subunit that will check the other stand for damage. In Bacteroides fragilis (strain YCH46), this protein is UvrABC system protein B.